Consider the following 577-residue polypeptide: 2-succinyl-5-enolpyruvyl-6-hydroxy-3-cyclohexene-1-carboxylate synthase (577 aa).

It belongs to the TPP enzyme family. MenD subfamily. As to quaternary structure, homodimer. It depends on Mg(2+) as a cofactor. Requires Mn(2+) as cofactor. Thiamine diphosphate is required as a cofactor.

The enzyme catalyses isochorismate + 2-oxoglutarate + H(+) = 5-enolpyruvoyl-6-hydroxy-2-succinyl-cyclohex-3-ene-1-carboxylate + CO2. The protein operates within quinol/quinone metabolism; 1,4-dihydroxy-2-naphthoate biosynthesis; 1,4-dihydroxy-2-naphthoate from chorismate: step 2/7. It functions in the pathway quinol/quinone metabolism; menaquinone biosynthesis. Its function is as follows. Catalyzes the thiamine diphosphate-dependent decarboxylation of 2-oxoglutarate and the subsequent addition of the resulting succinic semialdehyde-thiamine pyrophosphate anion to isochorismate to yield 2-succinyl-5-enolpyruvyl-6-hydroxy-3-cyclohexene-1-carboxylate (SEPHCHC). The polypeptide is 2-succinyl-5-enolpyruvyl-6-hydroxy-3-cyclohexene-1-carboxylate synthase (Porphyromonas gingivalis (strain ATCC BAA-308 / W83)).